Reading from the N-terminus, the 372-residue chain is tRNA-specific 2-thiouridylase MnmA (372 aa).

Residues Gly-11 to Ser-18 and Met-37 contribute to the ATP site. Positions Asn-97–Asp-99 are interaction with target base in tRNA. Cys-102 acts as the Nucleophile in catalysis. Residues Cys-102 and Cys-199 are joined by a disulfide bond. Gly-126 is a binding site for ATP. Residues Lys-149–Gln-151 form an interaction with tRNA region. Cys-199 serves as the catalytic Cysteine persulfide intermediate. Residues Arg-309 to Tyr-310 form an interaction with tRNA region.

It belongs to the MnmA/TRMU family.

Its subcellular location is the cytoplasm. The catalysed reaction is S-sulfanyl-L-cysteinyl-[protein] + uridine(34) in tRNA + AH2 + ATP = 2-thiouridine(34) in tRNA + L-cysteinyl-[protein] + A + AMP + diphosphate + H(+). Functionally, catalyzes the 2-thiolation of uridine at the wobble position (U34) of tRNA, leading to the formation of s(2)U34. The chain is tRNA-specific 2-thiouridylase MnmA from Staphylococcus aureus (strain MSSA476).